Consider the following 313-residue polypeptide: MRMRETQGAQGRGRNAPPFLRTILAYIALTKPRVIELLLVTTIPAMLLADRGDVNPLLILNTLLGGVMAAASANTLNCVADADIDKVMKRTARRPLAMSSVTTRNALIFGVVLGVGAFAWLWWTANLLSGLLAVATIAFYVFVYTLVLKRRTAQNVVWGGAAGCMPVMIGWSAVTNTIQWPALVMFAVIFFWTPPHTWALAMRYKEDYRAAGVPMLPVIATEEKVTKLILVYTWLTVLSTLALALAAGVIYAVVAFLAGVWFLAMAHQLYSGVRKGQPIRPLRLFLQSNNYLAVVFCALAVDSVVGWPTLFQL.

Transmembrane regions (helical) follow at residues 23–43, 56–76, 107–127, 128–148, 155–175, 182–202, 243–263, and 291–311; these read ILAY…VTTI, PLLI…ANTL, LIFG…TANL, LSGL…TLVL, NVVW…SAVT, ALVM…ALAM, LALA…VWFL, and YLAV…PTLF.

It belongs to the UbiA prenyltransferase family. Protoheme IX farnesyltransferase subfamily.

It localises to the cell membrane. It catalyses the reaction heme b + (2E,6E)-farnesyl diphosphate + H2O = Fe(II)-heme o + diphosphate. It participates in porphyrin-containing compound metabolism; heme O biosynthesis; heme O from protoheme: step 1/1. In terms of biological role, converts heme B (protoheme IX) to heme O by substitution of the vinyl group on carbon 2 of heme B porphyrin ring with a hydroxyethyl farnesyl side group. The protein is Protoheme IX farnesyltransferase of Mycobacteroides abscessus (strain ATCC 19977 / DSM 44196 / CCUG 20993 / CIP 104536 / JCM 13569 / NCTC 13031 / TMC 1543 / L948) (Mycobacterium abscessus).